The following is a 703-amino-acid chain: Leucine zipper putative tumor suppressor 3 (703 aa).

Disordered stretches follow at residues 1–22, 40–190, and 204–347; these read MAPADLASEGPKLEDPPAPHLF, RADP…SEPL, and FHSM…PPSP. Low complexity predominate over residues 96–107; the sequence is GSFPGPRSSGSG. The segment covering 109 to 124 has biased composition (basic and acidic residues); it reads NRERPGPGRYPSEDKV. Positions 205-218 are enriched in polar residues; it reads HSMQNLCPPQTNGT. A compositionally biased stretch (low complexity) spans 251–268; that stretch reads DSGRNSLTSLPTYSSSYS. Over residues 290-299 the composition is skewed to gly residues; it reads SSGGGGGGSG. A compositionally biased stretch (low complexity) spans 304–324; it reads GTSDSGRASSKSGSSSSMGRS. A compositionally biased stretch (gly residues) spans 325 to 336; the sequence is GHLGSGEGGNGG. 2 positions are modified to phosphoserine: serine 346 and serine 348. 2 coiled-coil regions span residues 348-526 and 600-669; these read SALI…SLRD and TRAL…RLRE. Residues 665-703 form a disordered region; it reads RRLRERGAAGGSRTPTPQHGEEEKAWTPSRLERIESTEI. Over residues 683–703 the composition is skewed to basic and acidic residues; it reads HGEEEKAWTPSRLERIESTEI.

It belongs to the LZTS3 family. Interacts (via C-terminus) with SHANK3 (via PDZ domain). Interacts (via coiled coil) with SIPA1L1. Can form homooligomers. As to expression, detected in brain, with highest expression in brain cortex, caudate putamen, cerebellum and hippocampus. Detected in neuropil (at protein level). Detected in brain and kidney.

It is found in the synapse. The protein localises to the postsynaptic density. The protein resides in the cell projection. It localises to the dendritic spine. Its subcellular location is the dendrite. It is found in the cytoplasm. The protein localises to the cytoskeleton. Functionally, may be involved in promoting the maturation of dendritic spines, probably via regulating SIPA1L1 levels at the postsynaptic density of synapses. The polypeptide is Leucine zipper putative tumor suppressor 3 (Rattus norvegicus (Rat)).